The primary structure comprises 1021 residues: Ras-related protein Rab-44 (1021 aa).

Residues 1–40 form a disordered region; sequence METGQRTSRKVRKLGSNRRRQTREPADGEGAAVAPEPESW. Residues 7 to 21 are compositionally biased toward basic residues; it reads TSRKVRKLGSNRRRQ. Residues 77–112 form the EF-hand domain; it reads GSKEESEMIFDWVDVERKGHLSLEEFSSGLKNIFGS. The interval 113-133 is disordered; the sequence is SQSPHRLRRRKPLPSKRVSAT. Basic residues predominate over residues 117 to 126; it reads HRLRRRKPLP. The stretch at 191–315 forms a coiled coil; the sequence is LAKMTSRLQE…AGRLEEVRGQ (125 aa). Disordered regions lie at residues 339–405, 419–483, and 495–827; these read SFPG…QTPR, LFGQ…LLWG, and VLIP…GGPQ. A compositionally biased stretch (basic and acidic residues) spans 443–467; sequence KDNKGVDPHEQDIRAEQPVEPHDPD. Pro residues predominate over residues 501–514; it reads DGPPPPANSPPPQA. Residues 532–559 are compositionally biased toward low complexity; it reads PGSWAPPSGAQPGAGAGPQEPTQTPPTM. The span at 676–685 shows a compositional bias: basic and acidic residues; sequence SEEGKQEGRG. Composition is skewed to polar residues over residues 688–697 and 710–727; these read DLSSEQSEQS and LPQQDSLLVSLPSATPQA. The span at 736-759 shows a compositional bias: low complexity; the sequence is PGKSAPPRGSPPRGAQPGAGAGPQ. The span at 783 to 810 shows a compositional bias: basic and acidic residues; it reads HAEEQGPPHSREPRAESRLEDPGMDSRE. GTP-binding positions include 840-847, 888-892, and 946-949; these read GDSNVGKT, DTAGQ, and NKMD. 2 S-geranylgeranyl cysteine lipidation sites follow: C1019 and C1020.

Belongs to the small GTPase superfamily. Rab family.

The protein localises to the cell membrane. The chain is Ras-related protein Rab-44 (RAB44) from Homo sapiens (Human).